The following is a 622-amino-acid chain: E3 ubiquitin-protein ligase hrd-1 (622 aa).

The N-terminal stretch at 1 to 23 (MRVSAGLMIGGSCVATAATVLNA) is a signal peptide. Topologically, residues 24-41 (FVINKQFYPSIVYLSKSN) are lumenal. A helical transmembrane segment spans residues 42–62 (ASMAVLYFQGIVLVYLMFQLL). The Cytoplasmic segment spans residues 63–99 (KSILFGDLRAAEAEHLSERTWHAVLETCLAFTVFRDD). A helical membrane pass occupies residues 100–120 (FSAMFVMQFIGLLFIKCFHWL). Topologically, residues 121–141 (ADDRVDMMERSPVITLRFHLR) are lumenal. Residues 142–162 (MMTVLAALGFADSYFVSSAYF) traverse the membrane as a helical segment. Residues 163–170 (STITKGAS) are Cytoplasmic-facing. A helical membrane pass occupies residues 171 to 191 (SQIVFGFEYAILLALVLHVTI). At 192-215 (KYLLHMHDLRNPQSWDNKAVYLLY) the chain is on the lumenal side. Residues 216-236 (AELLINLIRCVLYGFFAVIML) traverse the membrane as a helical segment. Topologically, residues 237–622 (RVHTFPLFSV…RFPPPNPEHE (386 aa)) are cytoplasmic. The RING-type; atypical zinc-finger motif lies at 292–333 (CIICREEMTVESSPKRLPCSHVFHAHCLRSWFQRQQTCPTCR). Positions 436-445 (MPPPPIPQPN) are enriched in pro residues. Disordered regions lie at residues 436–463 (MPPP…PNFD) and 514–622 (PVPT…PEHE). Positions 526 to 538 (ATASSVPTSVPSE) are enriched in low complexity. The span at 562 to 577 (FNDTQSTSTPSTSAGP) shows a compositional bias: polar residues. Residues 579–596 (PSLTPSTSSVPSTSSVRT) show a composition bias toward low complexity.

This sequence belongs to the HRD1 family. As to quaternary structure, homodimer.

The protein localises to the endoplasmic reticulum membrane. It catalyses the reaction S-ubiquitinyl-[E2 ubiquitin-conjugating enzyme]-L-cysteine + [acceptor protein]-L-lysine = [E2 ubiquitin-conjugating enzyme]-L-cysteine + N(6)-ubiquitinyl-[acceptor protein]-L-lysine.. It participates in protein modification; protein ubiquitination. Functionally, acts as an E3 ubiquitin-protein ligase which accepts ubiquitin specifically from endoplasmic reticulum-associated ubc-7 E2 ligase and transfers it to substrates, promoting their degradation. Component of the endoplasmic reticulum quality control (ERQC) system, which is also called the ER-associated degradation (ERAD) system, involved in ubiquitin-dependent degradation of misfolded endoplasmic reticulum proteins. Also promotes the degradation of normal but naturally short-lived proteins. Protects cells from ER stress-induced apoptosis. Thought to play a role together with hsp-3 in developmental growth and function of intestinal cells and to play a role together with hsp-4 in gonad formation. This Caenorhabditis briggsae protein is E3 ubiquitin-protein ligase hrd-1.